The primary structure comprises 373 residues: Capsular polysaccharide phosphotransferase (373 aa).

Belongs to the stealth family.

Its function is as follows. Part of a capsule gene locus. Expression was not detected under standard growth conditions. The sequence is that of Capsular polysaccharide phosphotransferase from Neisseria meningitidis serogroup B.